Consider the following 304-residue polypeptide: MEKNFKVAALYCFADLKHYRQLQKPLLDLCQAKDIKGTLLLAQEGINGTVAGSCAAIETLVDFITAEPAFQMPEIKYSWASKMPFHRMKVRLKKEIVTMGVDGVNPLKAVGTYVDPKDWNALIQDEETLLIDTRNDYEYAIGSFQGAVDPRIKTFREFPAWVLKHEADLKKKKKIAMFCTGGIRCEKSTAYVRELGYEQVYHLKGGILKYLETIPKEDSLWWGECFVFDERVSVKHGLEECGRELCRACRSPLNTESKLSPHYEEGVSCDACYNTRSEDDRERFRERHRQFQLSKLRAMHSHQE.

Residues 124–219 (QDEETLLIDT…YLETIPKEDS (96 aa)) form the Rhodanese domain. Cys-179 serves as the catalytic Cysteine persulfide intermediate.

This sequence belongs to the TrhO family.

It carries out the reaction uridine(34) in tRNA + AH2 + O2 = 5-hydroxyuridine(34) in tRNA + A + H2O. In terms of biological role, catalyzes oxygen-dependent 5-hydroxyuridine (ho5U) modification at position 34 in tRNAs. The chain is tRNA uridine(34) hydroxylase from Bartonella henselae (strain ATCC 49882 / DSM 28221 / CCUG 30454 / Houston 1) (Rochalimaea henselae).